A 318-amino-acid polypeptide reads, in one-letter code: Transaldolase (318 aa).

Lys-126 (schiff-base intermediate with substrate) is an active-site residue.

This sequence belongs to the transaldolase family. Type 1 subfamily. Homodimer.

The protein localises to the cytoplasm. It carries out the reaction D-sedoheptulose 7-phosphate + D-glyceraldehyde 3-phosphate = D-erythrose 4-phosphate + beta-D-fructose 6-phosphate. The protein operates within carbohydrate degradation; pentose phosphate pathway; D-glyceraldehyde 3-phosphate and beta-D-fructose 6-phosphate from D-ribose 5-phosphate and D-xylulose 5-phosphate (non-oxidative stage): step 2/3. Transaldolase is important for the balance of metabolites in the pentose-phosphate pathway. The protein is Transaldolase of Cupriavidus metallidurans (strain ATCC 43123 / DSM 2839 / NBRC 102507 / CH34) (Ralstonia metallidurans).